The following is a 274-amino-acid chain: Cytochrome b-c1 complex subunit Rieske, mitochondrial (274 aa).

Residues 79 to 103 (SHTDIKVPDFSEYRRLEVLDSTKSS) lie on the Mitochondrial matrix side of the membrane. A helical transmembrane segment spans residues 104 to 140 (RESSEARKGFSYLVTGVTTVGVAYAAKNAVTQFVSSM). At 141-274 (SASADVLALA…FTSDDMVIVG (134 aa)) the chain is on the mitochondrial intermembrane side. A Rieske domain is found at 187-272 (EAAVELSQLR…YEFTSDDMVI (86 aa)). C217, H219, C236, H239, and S241 together coordinate [2Fe-2S] cluster. A disulfide bridge connects residues C222 and C238.

It belongs to the Rieske iron-sulfur protein family. As to quaternary structure, component of the ubiquinol-cytochrome c oxidoreductase (cytochrome b-c1 complex, complex III, CIII), a multisubunit enzyme composed of 11 subunits. The complex is composed of 3 respiratory subunits cytochrome b, cytochrome c1 and Rieske protein UQCRFS1, 2 core protein subunits UQCRC1/QCR1 and UQCRC2/QCR2, and 6 low-molecular weight protein subunits UQCRH/QCR6, UQCRB/QCR7, UQCRQ/QCR8, UQCR10/QCR9, UQCR11/QCR10 and subunit 9, the cleavage product of Rieske protein UQCRFS1. The complex exists as an obligatory dimer and forms supercomplexes (SCs) in the inner mitochondrial membrane with NADH-ubiquinone oxidoreductase (complex I, CI) and cytochrome c oxidase (complex IV, CIV), resulting in different assemblies (supercomplex SCI(1)III(2)IV(1) and megacomplex MCI(2)III(2)IV(2)). Incorporation of the Rieske protein UQCRFS1 is the penultimate step in complex III assembly. Interacts with TTC19, which is involved in the clearance of UQCRFS1 fragments. In terms of assembly, component of the ubiquinol-cytochrome c oxidoreductase (cytochrome b-c1 complex, complex III, CIII). Subunit 9 corresponds to the mitochondrial targeting sequence (MTS) of Rieske protein UQCRFS1. It is retained after processing and incorporated inside complex III, where it remains bound to the complex and localizes between the 2 core subunits UQCRC1/QCR1 and UQCRC2/QCR2. [2Fe-2S] cluster serves as cofactor. Post-translationally, proteolytic processing is necessary for the correct insertion of UQCRFS1 in the complex III dimer. Several fragments are generated during UQCRFS1 insertion, most probably due to the endogenous matrix-processing peptidase (MPP) activity of the 2 core protein subunits UQCRC1/QCR1 and UQCRC2/QCR2, which are homologous to the 2 mitochondrial-processing peptidase (MPP) subunits beta-MPP and alpha-MPP respectively. The action of the protease is also necessary for the clearance of the UQCRFS1 fragments.

The protein resides in the mitochondrion inner membrane. The enzyme catalyses a quinol + 2 Fe(III)-[cytochrome c](out) = a quinone + 2 Fe(II)-[cytochrome c](out) + 2 H(+)(out). Functionally, component of the ubiquinol-cytochrome c oxidoreductase, a multisubunit transmembrane complex that is part of the mitochondrial electron transport chain which drives oxidative phosphorylation. The respiratory chain contains 3 multisubunit complexes succinate dehydrogenase (complex II, CII), ubiquinol-cytochrome c oxidoreductase (cytochrome b-c1 complex, complex III, CIII) and cytochrome c oxidase (complex IV, CIV), that cooperate to transfer electrons derived from NADH and succinate to molecular oxygen, creating an electrochemical gradient over the inner membrane that drives transmembrane transport and the ATP synthase. The cytochrome b-c1 complex catalyzes electron transfer from ubiquinol to cytochrome c, linking this redox reaction to translocation of protons across the mitochondrial inner membrane, with protons being carried across the membrane as hydrogens on the quinol. In the process called Q cycle, 2 protons are consumed from the matrix, 4 protons are released into the intermembrane space and 2 electrons are passed to cytochrome c. The Rieske protein is a catalytic core subunit containing a [2Fe-2S] iron-sulfur cluster. It cycles between 2 conformational states during catalysis to transfer electrons from the quinol bound in the Q(0) site in cytochrome b to cytochrome c1. Incorporation of UQCRFS1 is the penultimate step in complex III assembly. Component of the ubiquinol-cytochrome c oxidoreductase (cytochrome b-c1 complex, complex III, CIII). UQCRFS1 undergoes proteolytic processing once it is incorporated in the complex III dimer. One of the fragments, called subunit 9, corresponds to its mitochondrial targeting sequence (MTS). The proteolytic processing is necessary for the correct insertion of UQCRFS1 in the complex III dimer, but the persistence of UQCRFS1-derived fragments may prevent newly imported UQCRFS1 to be processed and assembled into complex III and is detrimental for the complex III structure and function. This is Cytochrome b-c1 complex subunit Rieske, mitochondrial (UQCRFS1) from Gorilla gorilla gorilla (Western lowland gorilla).